The sequence spans 1777 residues: Fatty acid synthase subunit alpha (1777 aa).

Residues 101–124 (APVESADNEPAQPAASSTPAAPAP) are disordered. Low complexity predominate over residues 110–120 (PAQPAASSTPA). Positions 151–237 (LSAIDVVISI…KVMGGHIDRL (87 aa)) constitute a Carrier domain. Residue S186 is modified to O-(pantetheine 4'-phosphoryl)serine. The interval 563 to 803 (FTGRRVLVTG…ILSLLSGDIL (241 aa)) is ketoreductase (KR) domain. The Ketosynthase family 3 (KS3) domain occupies 1007-1539 (KEIMHEVVID…QKGGLVVGIA (533 aa)). Active-site for beta-ketoacyl synthase activity residues include C1193, H1424, and H1465. D1661 serves as a coordination point for Mg(2+). Acetyl-CoA is bound by residues 1661–1663 (DIE), 1706–1716 (EAIFKSLQIPS), 1730–1734 (SNGAQ), and 1760–1762 (ITH).

It belongs to the thiolase-like superfamily. Fungal fatty acid synthetase subunit alpha family. As to quaternary structure, fatty acid synthase is composed of alpha and beta subunits.

It carries out the reaction acetyl-CoA + n malonyl-CoA + 2n NADPH + 4n H(+) = a long-chain-acyl-CoA + n CoA + n CO2 + 2n NADP(+).. It catalyses the reaction a fatty acyl-[ACP] + malonyl-[ACP] + H(+) = a 3-oxoacyl-[ACP] + holo-[ACP] + CO2. The catalysed reaction is a (3R)-hydroxyacyl-[ACP] + NADP(+) = a 3-oxoacyl-[ACP] + NADPH + H(+). Its pathway is secondary metabolite biosynthesis. Fatty acid synthase alpha subunit; part of the gene cluster that mediates the biosynthesis of oryzines, natural products with an unusual maleidride backbone. The two subunits of the fungal fatty acid synthase oryfasA and oryfasB probably form octenoic acid. This fatty acid is most likely activated by the acyl-CoA ligase oryP to give octenyl-CoA before the citrate synthase-like protein oryE catalyzes condensation with oxaloacetate to form tricarboxylic acid. The next steps of the pathways are conjectural, but a favorite possible route has been proposed, beginning with decarboxylation and concomitant dehydration by the decarboxylase oryM, followed by tautomerization, which may lead to the production of a diene intermediate. Reduction of this diene intermediate could give the known metabolite piliformic acid. On the pathway to oryzine B and oryzine A, however, hydroxylation of the diene by the alpha-ketoglutarate-dependent dioxygenase oryG and lactonisation by the lactonohydrolases oryH or oryL could give oryzine B directly. Finally, enoyl reduction by the dehydrogenase oryD would then convert oryzine B into oryzine A. The polypeptide is Fatty acid synthase subunit alpha (Aspergillus oryzae (strain ATCC 42149 / RIB 40) (Yellow koji mold)).